The primary structure comprises 174 residues: Peptide deformylase (174 aa).

Residues cysteine 91 and histidine 133 each coordinate Fe cation. The active site involves glutamate 134. Histidine 137 serves as a coordination point for Fe cation.

This sequence belongs to the polypeptide deformylase family. It depends on Fe(2+) as a cofactor.

The catalysed reaction is N-terminal N-formyl-L-methionyl-[peptide] + H2O = N-terminal L-methionyl-[peptide] + formate. Functionally, removes the formyl group from the N-terminal Met of newly synthesized proteins. Requires at least a dipeptide for an efficient rate of reaction. N-terminal L-methionine is a prerequisite for activity but the enzyme has broad specificity at other positions. The polypeptide is Peptide deformylase (Fusobacterium nucleatum subsp. nucleatum (strain ATCC 25586 / DSM 15643 / BCRC 10681 / CIP 101130 / JCM 8532 / KCTC 2640 / LMG 13131 / VPI 4355)).